A 346-amino-acid polypeptide reads, in one-letter code: G-protein coupled receptor homolog U12 (346 aa).

At 1-31 (MICYSFAKNVTFAFLIILQNFFSQHDEEYKY) the chain is on the extracellular side. The helical transmembrane segment at 32–56 (NYTCITPTVRKAQRLESVINGIMLT) threads the bilayer. Over 57–83 (LILPVSTVVICTLLIYYKWTKQTITSP) the chain is Cytoplasmic. Residues 84–108 (YLITLFISDSLHSLTVLLLTLNREA) form a helical membrane-spanning segment. The Extracellular portion of the chain corresponds to 109 to 115 (LTNLNQA). Residues 116–142 (LCQCVLFVYSASCTYSLCMLAVISTIR) traverse the membrane as a helical segment. Residues 143 to 159 (YRTLQRRTLNDKNNNHI) are Cytoplasmic-facing. A helical membrane pass occupies residues 160–181 (KRNVGILFLSSAMCAIPAVLYV). The Extracellular portion of the chain corresponds to 182–208 (QVEKKKGNYGKCNIHISTQKAYDLFIG). Residues 209-229 (IKIVYCFLWGIFPTVIFSYFY) traverse the membrane as a helical segment. Residues 230–245 (VIFGKTLRALTQSKHN) lie on the Cytoplasmic side of the membrane. A helical membrane pass occupies residues 246-272 (KTLSFISLLILSFLCIQIPNLLVMSVE). The Extracellular segment spans residues 273–286 (IFFLYIANTSCLGT). A helical membrane pass occupies residues 287–310 (IQREIVQIISRLMPEIHCLSNPLV). The Cytoplasmic segment spans residues 311–346 (YAFTRTDFRLRFYDFIKCNLCNSSLKRKRNPLTIKN).

It belongs to the G-protein coupled receptor 1 family.

The protein localises to the host cell membrane. The polypeptide is G-protein coupled receptor homolog U12 (U12) (Homo sapiens (Human)).